Reading from the N-terminus, the 147-residue chain is Proteinase inhibitor type-2 T (147 aa).

A signal peptide spans 1 to 25 (MAVHKEVSFVAYLLIVLGMFLYVDA). A run of 2 repeats spans residues 25-82 (ALGC…PKNP) and 83-142 (KACP…EPKP). 8 disulfides stabilise this stretch: Cys-28/Cys-116, Cys-32/Cys-112, Cys-40/Cys-122, Cys-52/Cys-89, Cys-55/Cys-73, Cys-56/Cys-85, Cys-62/Cys-98, and Cys-115/Cys-133.

Belongs to the protease inhibitor I20 (potato type II proteinase inhibitor) family.

Its function is as follows. Inhibitor of trypsin and chymotrypsin. This chain is Proteinase inhibitor type-2 T (PIN2T), found in Solanum tuberosum (Potato).